The following is a 310-amino-acid chain: Low-salt glycan biosynthesis protein Agl12 (310 aa).

NAD(+) is bound by residues 7–13, 32–35, and 58–59; these read GGAGFIG, DALT, and DI. S82 is a substrate binding site. T97 is an NAD(+) binding site. Substrate contacts are provided by residues T122 and 122–124; that span reads TDE. D123 functions as the Proton donor in the catalytic mechanism. Catalysis depends on proton acceptor residues E124 and Y146. 146 to 150 serves as a coordination point for NAD(+); sequence YSATK. N175 lines the substrate pocket. N176 provides a ligand contact to NAD(+). Residues 185-186, 201-203, R210, N245, and 269-272 contribute to the substrate site; these read KL, PVY, and RAGH.

It belongs to the NAD(P)-dependent epimerase/dehydratase family. dTDP-glucose dehydratase subfamily. The cofactor is NAD(+).

It functions in the pathway protein modification; protein glycosylation. The protein operates within cell surface structure biogenesis; S-layer biogenesis. Its function is as follows. Lyase involved in N-glycan biosynthetic pathway that takes place under low-salt conditions (1.75 M instead of 3.4 M). Participates in the formation of the tetrasaccharide present at 'Asn-532' of S-layer glycoprotein Csg, consisting of a sulfated hexose, 2 hexoses and rhamnose. Involved in the addition of final rhamnose (sugar 4) of the tetrasaccharide on the dolichol phosphate carrier. The protein is Low-salt glycan biosynthesis protein Agl12 (agl12) of Haloferax volcanii (strain ATCC 29605 / DSM 3757 / JCM 8879 / NBRC 14742 / NCIMB 2012 / VKM B-1768 / DS2) (Halobacterium volcanii).